Here is a 461-residue protein sequence, read N- to C-terminus: Tip elongation protein 1 (461 aa).

The region spanning 22 to 69 (GEVENRKGVYVGLELLPEFAEFGKNRGVVDGREYFKTKNNEKTGIFVP) is the CAP-Gly domain. Phosphoserine occurs at positions 82, 84, 289, 294, and 305. Residues 134 to 418 (TEKILQKRIE…RMSPAEFELE (285 aa)) adopt a coiled-coil conformation. Residues 278–303 (KANSSTANEKLSHMESSSPTLTNASF) are compositionally biased toward polar residues. The interval 278–323 (KANSSTANEKLSHMESSSPTLTNASFESPKRGKGSNDLPENHPQRR) is disordered. Thr-367 is subject to Phosphothreonine. The disordered stretch occupies residues 417 to 437 (LETTQEVEENDSDSHDDEETW).

As to quaternary structure, monomer. Interacts with tea1 and tea2. Interacts with tea4 in the presence of tea1.

It is found in the cytoplasm. Its subcellular location is the cytoskeleton. Functionally, has a role in stabilizing and targeting the growing tips of the microtubules along the long axis of the cell, directing them to the ends of the cell. Acts as a cargo for tea2. This is Tip elongation protein 1 (tip1) from Schizosaccharomyces pombe (strain 972 / ATCC 24843) (Fission yeast).